Reading from the N-terminus, the 176-residue chain is Ribosome maturation factor RimP (176 aa).

It belongs to the RimP family.

The protein resides in the cytoplasm. Its function is as follows. Required for maturation of 30S ribosomal subunits. The chain is Ribosome maturation factor RimP from Chlorobium limicola (strain DSM 245 / NBRC 103803 / 6330).